The primary structure comprises 116 residues: Protein Rev (116 aa).

S5 bears the Phosphoserine; by host CK2 mark. The tract at residues 18 to 26 is homomultimerization; that stretch reads YIKILYQSN. Positions 34 to 50 match the Nuclear localization signal and RNA-binding (RRE) motif; sequence TRKARRNRRRRWRARQR. Positions 73-84 match the Nuclear export signal and binding to XPO1 motif; the sequence is LQLPLLEKLHIN. The disordered stretch occupies residues 90-116; that stretch reads GQGTEKGVGSPQISVESRAVLGSGTKE. Position 99 is a phosphoserine; by host (S99).

Belongs to the HIV-1 REV protein family. In terms of assembly, homomultimer; when bound to the RRE. Multimeric assembly is essential for activity and may involve XPO1. Binds to human KPNB1, XPO1, TNPO1, RANBP5 and IPO7. Interacts with the viral Integrase. Interacts with human KHDRBS1. Interacts with human NAP1; this interaction decreases Rev multimerization and stimulates its activity. Interacts with human DEAD-box helicases DDX3 and DDX24; these interactions may serve for viral RNA export to the cytoplasm and packaging, respectively. Interacts with human PSIP1; this interaction may inhibit HIV-1 DNA integration by promoting dissociation of the Integrase-LEDGF/p75 complex. In terms of processing, asymmetrically arginine dimethylated at one site by host PRMT6. Methylation impairs the RNA-binding activity and export of viral RNA from the nucleus to the cytoplasm. Phosphorylated by protein kinase CK2. Presence of, and maybe binding to the N-terminus of the regulatory beta subunit of CK2 is necessary for CK2-mediated Rev's phosphorylation.

It is found in the host nucleus. The protein localises to the host nucleolus. The protein resides in the host cytoplasm. Escorts unspliced or incompletely spliced viral pre-mRNAs (late transcripts) out of the nucleus of infected cells. These pre-mRNAs carry a recognition sequence called Rev responsive element (RRE) located in the env gene, that is not present in fully spliced viral mRNAs (early transcripts). This function is essential since most viral proteins are translated from unspliced or partially spliced pre-mRNAs which cannot exit the nucleus by the pathway used by fully processed cellular mRNAs. Rev itself is translated from a fully spliced mRNA that readily exits the nucleus. Rev's nuclear localization signal (NLS) binds directly to KPNB1/Importin beta-1 without previous binding to KPNA1/Importin alpha-1. KPNB1 binds to the GDP bound form of RAN (Ran-GDP) and targets Rev to the nucleus. In the nucleus, the conversion from Ran-GDP to Ran-GTP dissociates Rev from KPNB1 and allows Rev's binding to the RRE in viral pre-mRNAs. Rev multimerization on the RRE via cooperative assembly exposes its nuclear export signal (NES) to the surface. Rev can then form a complex with XPO1/CRM1 and Ran-GTP, leading to nuclear export of the complex. Conversion from Ran-GTP to Ran-GDP mediates dissociation of the Rev/RRE/XPO1/RAN complex, so that Rev can return to the nucleus for a subsequent round of export. Beside KPNB1, also seems to interact with TNPO1/Transportin-1, RANBP5/IPO5 and IPO7/RANBP7 for nuclear import. The nucleoporin-like HRB/RIP is an essential cofactor that probably indirectly interacts with Rev to release HIV RNAs from the perinuclear region to the cytoplasm. The chain is Protein Rev from Human immunodeficiency virus type 1 group M subtype F2 (isolate MP257) (HIV-1).